Reading from the N-terminus, the 375-residue chain is Ubl carboxyl-terminal hydrolase 18 (375 aa).

Positions 18-45 are disordered; it reads ESPQSPADLEEKKEEDSNMKREQPRERP. Residues 26-45 are compositionally biased toward basic and acidic residues; it reads LEEKKEEDSNMKREQPRERP. One can recognise a USP domain in the interval 55 to 373; the sequence is VGLHNIGQTC…TAYLLVYMKM (319 aa). C64 functions as the Nucleophile in the catalytic mechanism. Residue H321 is the Proton acceptor of the active site.

It belongs to the peptidase C19 family. Interacts with STAT2; the interaction is direct. Interacts with IFNAR2; indirectly via STAT2, it negatively regulates the assembly of the ternary interferon-IFNAR1-IFNAR2 complex and inhibits type I interferon signaling. Interacts with STING1. Interacts with USP20.

It catalyses the reaction Thiol-dependent hydrolysis of ester, thioester, amide, peptide and isopeptide bonds formed by the C-terminal Gly of ubiquitin (a 76-residue protein attached to proteins as an intracellular targeting signal).. Functionally, interferon-induced ISG15-specific protease that plays a crucial role for maintaining a proper balance of ISG15-conjugated proteins in cells. Regulates protein ISGylation by efficiently cleaving ISG15 conjugates linked via isopeptide bonds. Regulates T-cell activation and T-helper 17 (Th17) cell differentiation by deubiquitinating TAK1, likely to keep TAK1-TAB complexes in steady conditions. In turn, restricts activation of NF-kappa-B, NFAT, and JNK as well as expression of IL2 in T-cells after TCR activation. Acts as a molecular adapter with USP20 to promote innate antiviral response through deubiquitinating STING1. Involved also in the negative regulation of the inflammatory response triggered by type I interferon. Upon recruitment by STAT2 to the type I interferon receptor subunit IFNAR2 interferes with the assembly of the ternary interferon-IFNAR1-IFNAR2 complex and acts as a negative regulator of the type I interferon signaling pathway. This chain is Ubl carboxyl-terminal hydrolase 18 (USP18), found in Pongo abelii (Sumatran orangutan).